A 494-amino-acid polypeptide reads, in one-letter code: Probable 26S proteasome non-ATPase regulatory subunit 3 (494 aa).

A PCI domain is found at 247–426 (ARFLYYLGRI…NFMRSKESTD (180 aa)). The segment at 458 to 494 (PPKSYGKDLESAEERREREQQDLELAKEMAEDDEDGF) is disordered. A compositionally biased stretch (basic and acidic residues) spans 462–486 (YGKDLESAEERREREQQDLELAKEM).

It belongs to the proteasome subunit S3 family. In terms of assembly, the 26S proteasome is composed of a core protease, known as the 20S proteasome, capped at one or both ends by the 19S regulatory complex (RC). The RC is composed of at least 18 different subunits in two subcomplexes, the base and the lid, which form the portions proximal and distal to the 20S proteolytic core, respectively. In terms of tissue distribution, blood (crystal) cells and cuticle.

Functionally, acts as a regulatory subunit of the 26 proteasome which is involved in the ATP-dependent degradation of ubiquitinated proteins. The polypeptide is Probable 26S proteasome non-ATPase regulatory subunit 3 (Rpn3) (Drosophila melanogaster (Fruit fly)).